We begin with the raw amino-acid sequence, 178 residues long: MLEGVIRESITKANAKALKKDGYLIANVYGKGIENVNGAFKLNPFIKYLKEKKHLIFPVKLGDKTFEVVVQEYQKNPVTNELIHVDLLAVTKGVKSKFKVPVKHQGTPVGLKNKGILMLSKKRISVECAPEHLPDHYLVDVAPLDVNESILVRDLEKHENVKILDHDSIAVIGVIKAK.

Belongs to the bacterial ribosomal protein bL25 family. CTC subfamily. Part of the 50S ribosomal subunit; part of the 5S rRNA/L5/L18/L25 subcomplex. Contacts the 5S rRNA. Binds to the 5S rRNA independently of L5 and L18.

Its function is as follows. This is one of the proteins that binds to the 5S RNA in the ribosome where it forms part of the central protuberance. This Helicobacter pylori (strain HPAG1) protein is Large ribosomal subunit protein bL25.